Reading from the N-terminus, the 316-residue chain is Tyrosine recombinase XerD (316 aa).

The 94-residue stretch at 4-97 (AALQTQLQGY…AVRGLHRFAV (94 aa)) folds into the Core-binding (CB) domain. The 192-residue stretch at 118-309 (RLPKSLTVDE…TVQALREVWA (192 aa)) folds into the Tyr recombinase domain. Active-site residues include Arg162, Lys186, His261, Arg264, and His287. Tyr296 functions as the O-(3'-phospho-DNA)-tyrosine intermediate in the catalytic mechanism.

This sequence belongs to the 'phage' integrase family. XerD subfamily. Forms a cyclic heterotetrameric complex composed of two molecules of XerC and two molecules of XerD.

Its subcellular location is the cytoplasm. In terms of biological role, site-specific tyrosine recombinase, which acts by catalyzing the cutting and rejoining of the recombining DNA molecules. The XerC-XerD complex is essential to convert dimers of the bacterial chromosome into monomers to permit their segregation at cell division. It also contributes to the segregational stability of plasmids. This is Tyrosine recombinase XerD from Mycobacterium leprae (strain TN).